We begin with the raw amino-acid sequence, 244 residues long: tRNA (guanine-N(1)-)-methyltransferase (244 aa).

Residues Gly-113 and 133–138 (IGDYVL) each bind S-adenosyl-L-methionine.

Belongs to the RNA methyltransferase TrmD family. As to quaternary structure, homodimer.

It is found in the cytoplasm. It catalyses the reaction guanosine(37) in tRNA + S-adenosyl-L-methionine = N(1)-methylguanosine(37) in tRNA + S-adenosyl-L-homocysteine + H(+). Functionally, specifically methylates guanosine-37 in various tRNAs. This Bacillus cereus (strain B4264) protein is tRNA (guanine-N(1)-)-methyltransferase.